The primary structure comprises 546 residues: DDB1- and CUL4-associated factor 11 (546 aa).

The span at 1–19 shows a compositional bias: low complexity; the sequence is MGSRNSSSAGSGSGDPSEG. A disordered region spans residues 1–40; the sequence is MGSRNSSSAGSGSGDPSEGLTRRGAGLRRSEEEEEEDEDV. A Phosphoserine modification is found at Ser75. WD repeat units follow at residues 170 to 210, 216 to 258, 263 to 302, 305 to 345, 353 to 392, 435 to 480, and 481 to 520; these read SYSQ…RKFK, DVGW…TALD, ERRFAVFSIAVSSDGREVLGGANDGCLYVFDREQNRRTLQ, SHED…EDDP, GHQDGITFIDSKGDARYLISNSKDQTIKLWDIRRFSSREG, GVLH…KKLT, and NHKACVRDVSWHPFEEKIVSSSWDGNLRLWQYRQAEYFQD. The tract at residues 523 to 546 is disordered; it reads PESEECASAPAPVPRSSTPFSSPQ. Residues 537–546 are compositionally biased toward polar residues; that stretch reads RSSTPFSSPQ.

As to quaternary structure, interacts with DDB1 and CUL4A.

It functions in the pathway protein modification; protein ubiquitination. May function as a substrate receptor for CUL4-DDB1 E3 ubiquitin-protein ligase complex. The sequence is that of DDB1- and CUL4-associated factor 11 (DCAF11) from Pongo abelii (Sumatran orangutan).